A 65-amino-acid chain; its full sequence is Large ribosomal subunit protein bL35 (65 aa).

The protein belongs to the bacterial ribosomal protein bL35 family.

This is Large ribosomal subunit protein bL35 from Paraburkholderia xenovorans (strain LB400).